Consider the following 369-residue polypeptide: S-adenosyl-L-methionine-dependent uroporphyrinogen III methyltransferase, chloroplastic (369 aa).

Residues 1–28 (MALVQRIPISSSSIRNWQQARTNLTPIC) constitute a chloroplast transit peptide. Residues P124, 200–202 (GGD), 230–231 (TA), M284, and T341 each bind S-adenosyl-L-homocysteine.

Belongs to the precorrin methyltransferase family. As to expression, mostly expressed in leaves, and, to a lower extent, in stems, flowers and siliques.

It is found in the plastid. The protein localises to the chloroplast. The enzyme catalyses uroporphyrinogen III + 2 S-adenosyl-L-methionine = precorrin-2 + 2 S-adenosyl-L-homocysteine + H(+). It participates in porphyrin-containing compound metabolism; siroheme biosynthesis; precorrin-2 from uroporphyrinogen III: step 1/1. Essential protein required for siroheme biosynthesis. Catalyzes the two successive C-2 and C-7 methylation reactions involved in the conversion of uroporphyrinogen III to precorrin-2 via the intermediate formation of precorrin-1. It is a step in the biosynthesis of siroheme. Promotes nitrogen and sulfur assimilation as well as photosynthesis efficiency by triggering chlorophyll, nitrite reductase (NiR) and sulfite reductase (SiR) biosynthesis. In Arabidopsis thaliana (Mouse-ear cress), this protein is S-adenosyl-L-methionine-dependent uroporphyrinogen III methyltransferase, chloroplastic.